The primary structure comprises 176 residues: Large ribosomal subunit protein bL28m (176 aa).

A mitochondrion-targeting transit peptide spans 1-8 (MASKLLRK).

This sequence belongs to the bacterial ribosomal protein bL28 family. As to quaternary structure, component of the mitochondrial large ribosomal subunit (mt-LSU). Mature yeast 74S mitochondrial ribosomes consist of a small (37S) and a large (54S) subunit. The 37S small subunit contains a 15S ribosomal RNA (15S mt-rRNA) and at least 32 different proteins. The 54S large subunit contains a 21S rRNA (21S mt-rRNA) and at least 45 different proteins.

The protein resides in the cytoplasm. It is found in the mitochondrion. In terms of biological role, component of the mitochondrial ribosome (mitoribosome), a dedicated translation machinery responsible for the synthesis of mitochondrial genome-encoded proteins, including at least some of the essential transmembrane subunits of the mitochondrial respiratory chain. The mitoribosomes are attached to the mitochondrial inner membrane and translation products are cotranslationally integrated into the membrane. The protein is Large ribosomal subunit protein bL28m (mrpl24) of Schizosaccharomyces pombe (strain 972 / ATCC 24843) (Fission yeast).